Consider the following 305-residue polypeptide: Aurora/IPL1-related protein kinase 2 (305 aa).

Residues 30–280 form the Protein kinase domain; sequence FEIGRPLGKG…LEQVKEHYWI (251 aa). Residues 36-44 and lysine 59 each bind ATP; that span reads LGKGKFGSV. Catalysis depends on aspartate 153, which acts as the Proton acceptor.

The protein belongs to the protein kinase superfamily. Ser/Thr protein kinase family. Aurora subfamily. In terms of assembly, component of the CPC complex which consists of icp-1; csc-1; bir-1 and air-2. Within the complex, interacts with icp-1; csc-1 and bir-1. Interacts with zen-4. Interacts with tlk-1 and bmk-1. In terms of processing, phosphorylated. Increased phosphorylation upon chromatin obstructions at anaphase.

It localises to the cytoplasm. The protein resides in the cytoskeleton. The protein localises to the chromosome. It is found in the midbody. Its subcellular location is the spindle. The enzyme catalyses L-seryl-[protein] + ATP = O-phospho-L-seryl-[protein] + ADP + H(+). It catalyses the reaction L-threonyl-[protein] + ATP = O-phospho-L-threonyl-[protein] + ADP + H(+). In terms of biological role, serine/threonine-protein kinase component of the chromosomal passenger complex (CPC), a complex that acts as a key regulator of chromosome segregation and cytokinesis. The CPC complex has essential functions at the centromere in ensuring correct chromosome alignment and segregation. Required for histone H3 phosphorylation during segregation of homologous chromosomes in meiosis and mitosis. Required for histone H3 'Ser-10' phosphorylation. Phosphorylates tlk-1 at 'Ser-634', which enhances its activity. Phosphorylates zen-4 at 'Ser-680'. Required for the recruitment of bub-1 to the ring-shaped domain between chromosomes during meiotic anaphase I. Also required for the localization of the condensin I complex subunit smc-4 to mitotic chromosomes. Acts at the spindle midzone and the midbody to prevent cleavage furrow regression upon chromatin obstructions during cytokinesis. The chain is Aurora/IPL1-related protein kinase 2 from Caenorhabditis elegans.